The following is a 157-amino-acid chain: Probable succinate transporter subunit YjjB (157 aa).

Helical transmembrane passes span 6–26 (IILT…GFAM), 51–71 (VLMI…ILVG), 87–107 (VFTV…VAMI), and 129–149 (FLKA…PGLW).

The protein belongs to the ThrE exporter (TC 2.A.79) family. In terms of assembly, the transporter is composed of YjjB and YjjP.

Its subcellular location is the cell inner membrane. Functionally, involved in succinate export with YjjP. Both proteins are required for export. This Proteus mirabilis (strain HI4320) protein is Probable succinate transporter subunit YjjB.